The chain runs to 124 residues: Small ribosomal subunit protein uS12 (124 aa).

The residue at position 89 (aspartate 89) is a 3-methylthioaspartic acid.

This sequence belongs to the universal ribosomal protein uS12 family. Part of the 30S ribosomal subunit. Contacts proteins S8 and S17. May interact with IF1 in the 30S initiation complex.

With S4 and S5 plays an important role in translational accuracy. Functionally, interacts with and stabilizes bases of the 16S rRNA that are involved in tRNA selection in the A site and with the mRNA backbone. Located at the interface of the 30S and 50S subunits, it traverses the body of the 30S subunit contacting proteins on the other side and probably holding the rRNA structure together. The combined cluster of proteins S8, S12 and S17 appears to hold together the shoulder and platform of the 30S subunit. The sequence is that of Small ribosomal subunit protein uS12 from Pasteurella multocida (strain Pm70).